Reading from the N-terminus, the 143-residue chain is Deoxyuridine 5'-triphosphate nucleotidohydrolase (143 aa).

Substrate is bound by residues 63–65 (RSG), asparagine 76, 80–82 (TID), and lysine 90.

This sequence belongs to the dUTPase family. Mg(2+) is required as a cofactor.

The catalysed reaction is dUTP + H2O = dUMP + diphosphate + H(+). It participates in pyrimidine metabolism; dUMP biosynthesis; dUMP from dCTP (dUTP route): step 2/2. In terms of biological role, this enzyme is involved in nucleotide metabolism: it produces dUMP, the immediate precursor of thymidine nucleotides and it decreases the intracellular concentration of dUTP so that uracil cannot be incorporated into DNA. This is Deoxyuridine 5'-triphosphate nucleotidohydrolase from Clostridioides difficile (Peptoclostridium difficile).